A 580-amino-acid polypeptide reads, in one-letter code: Isochorismate synthase, chloroplastic (580 aa).

The N-terminal 91 residues, 1-91 (MASITGHCVA…LAMERLSSAV (91 aa)), are a transit peptide targeting the chloroplast.

The protein belongs to the isochorismate synthase family. Mg(2+) serves as cofactor.

It is found in the plastid. It localises to the chloroplast. It catalyses the reaction chorismate = isochorismate. Its activity is regulated as follows. Not inhibited by Tyr, Phe or Trp. Functionally, involved in the synthesis of o-succinylbenzoic acid, 2,3-dihydroxybenzoic acid and salicylic acid (SA). In Catharanthus roseus (Madagascar periwinkle), this protein is Isochorismate synthase, chloroplastic.